The primary structure comprises 271 residues: Putative pirin-like protein At3g59260 (271 aa).

This sequence belongs to the pirin family.

Its subcellular location is the nucleus. In Arabidopsis thaliana (Mouse-ear cress), this protein is Putative pirin-like protein At3g59260.